Reading from the N-terminus, the 566-residue chain is ATP-dependent RNA helicase DBP3 (566 aa).

Positions 1–139 (MSAGKKHARD…TTPNGSAQRN (139 aa)) are disordered. Residues 39 to 58 (DKKKKDKKDKKERKEKKEKK) show a composition bias toward basic residues. The span at 81 to 91 (SEPKPEKEKKE) shows a compositional bias: basic and acidic residues. Residues 92-102 (KNNKKDKKDKK) show a composition bias toward basic residues. The span at 127–139 (AATTTPNGSAQRN) shows a compositional bias: polar residues. The short motif at 182 to 209 (IHFSHLPTSTLTSKKPFASFTAPTPIQA) is the Q motif element. The Helicase ATP-binding domain maps to 212-396 (WPFALSGRDV…EGFMIDPVKA (185 aa)). Residue 225–232 (AETGSGKT) participates in ATP binding. Positions 342–345 (DEAD) match the DEAD box motif. Residues 433–566 (GKEQRLLELL…TEHDKSHSGS (134 aa)) form the Helicase C-terminal domain.

This sequence belongs to the DEAD box helicase family. DDX5/DBP2 subfamily.

It localises to the nucleus. Its subcellular location is the nucleolus. The catalysed reaction is ATP + H2O = ADP + phosphate + H(+). ATP-dependent RNA helicase required for 60S ribosomal subunit synthesis. Involved in efficient pre-rRNA processing, predominantly at site A3, which is necessary for the normal formation of 25S and 5.8S rRNAs. This chain is ATP-dependent RNA helicase DBP3 (DBP3), found in Chaetomium globosum (strain ATCC 6205 / CBS 148.51 / DSM 1962 / NBRC 6347 / NRRL 1970) (Soil fungus).